The following is a 116-amino-acid chain: UPF0342 protein lhv_1666 (116 aa).

It belongs to the UPF0342 family.

The sequence is that of UPF0342 protein lhv_1666 from Lactobacillus helveticus (strain DPC 4571).